The sequence spans 530 residues: Phosphoenolpyruvate carboxykinase (ATP) (530 aa).

Positions 58, 195, and 201 each coordinate substrate. ATP contacts are provided by residues lysine 201, histidine 220, and 236–244 (GLSGTGKTT). Mn(2+) is bound by residues lysine 201 and histidine 220. A Mn(2+)-binding site is contributed by aspartate 257. Residues glutamate 285, arginine 321, 440–441 (RI), and threonine 446 each bind ATP. Arginine 321 contributes to the substrate binding site.

It belongs to the phosphoenolpyruvate carboxykinase (ATP) family. Mn(2+) serves as cofactor.

It localises to the cytoplasm. It catalyses the reaction oxaloacetate + ATP = phosphoenolpyruvate + ADP + CO2. The protein operates within carbohydrate biosynthesis; gluconeogenesis. Functionally, involved in the gluconeogenesis. Catalyzes the conversion of oxaloacetate (OAA) to phosphoenolpyruvate (PEP) through direct phosphoryl transfer between the nucleoside triphosphate and OAA. This is Phosphoenolpyruvate carboxykinase (ATP) from Staphylococcus aureus (strain MRSA252).